The primary structure comprises 350 residues: Nicotinate-nucleotide--dimethylbenzimidazole phosphoribosyltransferase (350 aa).

The active-site Proton acceptor is Glu-317.

This sequence belongs to the CobT family.

It catalyses the reaction 5,6-dimethylbenzimidazole + nicotinate beta-D-ribonucleotide = alpha-ribazole 5'-phosphate + nicotinate + H(+). The protein operates within nucleoside biosynthesis; alpha-ribazole biosynthesis; alpha-ribazole from 5,6-dimethylbenzimidazole: step 1/2. Catalyzes the synthesis of alpha-ribazole-5'-phosphate from nicotinate mononucleotide (NAMN) and 5,6-dimethylbenzimidazole (DMB). This chain is Nicotinate-nucleotide--dimethylbenzimidazole phosphoribosyltransferase, found in Shewanella sp. (strain ANA-3).